The sequence spans 188 residues: Cell division protein SepF (188 aa).

Positions 29–53 (EQQDQDQRATQADGGALATLGDSNP) are disordered.

The protein belongs to the SepF family. Homodimer. Interacts with FtsZ.

It is found in the cytoplasm. Functionally, cell division protein that is part of the divisome complex and is recruited early to the Z-ring. Probably stimulates Z-ring formation, perhaps through the cross-linking of FtsZ protofilaments. Its function overlaps with FtsA. This Synechococcus sp. (strain CC9902) protein is Cell division protein SepF.